We begin with the raw amino-acid sequence, 151 residues long: Transcriptional regulator MraZ (151 aa).

SpoVT-AbrB domains follow at residues 5-56 (THRH…PLPT) and 85-128 (SEEL…DAAR).

This sequence belongs to the MraZ family. As to quaternary structure, forms oligomers.

Its subcellular location is the cytoplasm. The protein resides in the nucleoid. The polypeptide is Transcriptional regulator MraZ (Acidithiobacillus ferrooxidans (strain ATCC 23270 / DSM 14882 / CIP 104768 / NCIMB 8455) (Ferrobacillus ferrooxidans (strain ATCC 23270))).